We begin with the raw amino-acid sequence, 239 residues long: Small ribosomal subunit protein eS1 (239 aa).

The tract at residues 1–24 (MAIQPPGSYPQGNKKGKAKKKSGQ) is disordered.

It belongs to the eukaryotic ribosomal protein eS1 family. Component of the small ribosomal subunit. Mature ribosomes consist of a small (40S) and a large (60S) subunit. The 40S subunit contains about 33 different proteins and 1 molecule of RNA (18S). The 60S subunit contains about 49 different proteins and 3 molecules of RNA (25S, 5.8S and 5S).

The protein resides in the cytoplasm. The chain is Small ribosomal subunit protein eS1 from Encephalitozoon cuniculi (strain GB-M1) (Microsporidian parasite).